Consider the following 132-residue polypeptide: Small ribosomal subunit protein uS8 (132 aa).

The protein belongs to the universal ribosomal protein uS8 family. In terms of assembly, part of the 30S ribosomal subunit. Contacts proteins S5 and S12.

In terms of biological role, one of the primary rRNA binding proteins, it binds directly to 16S rRNA central domain where it helps coordinate assembly of the platform of the 30S subunit. This is Small ribosomal subunit protein uS8 from Xanthomonas campestris pv. campestris (strain 8004).